The sequence spans 406 residues: Imidazolonepropionase (406 aa).

Residues His-72 and His-74 each coordinate Fe(3+). Zn(2+) contacts are provided by His-72 and His-74. Residues Arg-81, Tyr-144, and His-177 each coordinate 4-imidazolone-5-propanoate. An N-formimidoyl-L-glutamate-binding site is contributed by Tyr-144. A Fe(3+)-binding site is contributed by His-242. Zn(2+) is bound at residue His-242. Gln-245 contacts 4-imidazolone-5-propanoate. A Fe(3+)-binding site is contributed by Asp-317. Asp-317 contacts Zn(2+). N-formimidoyl-L-glutamate is bound by residues Asn-319 and Gly-321. Thr-322 lines the 4-imidazolone-5-propanoate pocket.

This sequence belongs to the metallo-dependent hydrolases superfamily. HutI family. Requires Zn(2+) as cofactor. It depends on Fe(3+) as a cofactor.

It is found in the cytoplasm. The enzyme catalyses 4-imidazolone-5-propanoate + H2O = N-formimidoyl-L-glutamate. The protein operates within amino-acid degradation; L-histidine degradation into L-glutamate; N-formimidoyl-L-glutamate from L-histidine: step 3/3. In terms of biological role, catalyzes the hydrolytic cleavage of the carbon-nitrogen bond in imidazolone-5-propanoate to yield N-formimidoyl-L-glutamate. It is the third step in the universal histidine degradation pathway. The protein is Imidazolonepropionase of Yersinia pseudotuberculosis serotype O:1b (strain IP 31758).